The following is a 515-amino-acid chain: Na(+)/H(+) antiporter NhaB (515 aa).

11 helical membrane-spanning segments follow: residues 23 to 43, 45 to 65, 96 to 116, 136 to 156, 204 to 224, 245 to 265, 305 to 325, 349 to 369, 393 to 413, 449 to 469, and 480 to 500; these read LAIIIFLIINPLIFFFINPFV, GWLLVIEFIFTLAMALKCYPL, VVLLLIFMVAGIYFMKQLLLF, CLASAFLSAFLDALTVIAVVI, LMMHAGVGTALGGVMTMVGEP, APITLPVFICGLLVCFLVEHF, ALIGIWLIVALAFHLAEVGLI, FEEALPFTALLTVFFSIVAVI, LFYLFNGLLSSVSDNVFVGTV, ATPNGQAAFLFLLTSTLSPLI, and ALPYTIVMTLVGLLCVEFLLI.

The protein belongs to the NhaB Na(+)/H(+) (TC 2.A.34) antiporter family.

The protein localises to the cell inner membrane. It carries out the reaction 2 Na(+)(in) + 3 H(+)(out) = 2 Na(+)(out) + 3 H(+)(in). Functionally, na(+)/H(+) antiporter that extrudes sodium in exchange for external protons. This is Na(+)/H(+) antiporter NhaB from Photorhabdus laumondii subsp. laumondii (strain DSM 15139 / CIP 105565 / TT01) (Photorhabdus luminescens subsp. laumondii).